The following is a 53-amino-acid chain: Membrane antigen containing repeating peptides (53 aa).

Repeat copies occupy residues 1–10 (EAEEAARLQA), 11–20 (EAEEAARQQA), 21–30 (EAEEAARLQA), 31–40 (EAEEAARLQA), 41–50 (EAEEAARLQA), and 51–53 (EAE). Residues 1-53 (EAEEAARLQAEAEEAARQQAEAEEAARLQAEAEEAARLQAEAEEAARLQAEAE) are 6 X 10 AA tandem repeats. Residues 1–53 (EAEEAARLQAEAEEAARQQAEAEEAARLQAEAEEAARLQAEAEEAARLQAEAE) are disordered.

The protein localises to the membrane. The chain is Membrane antigen containing repeating peptides from Leishmania major.